A 105-amino-acid chain; its full sequence is Synaptic plasticity regulator PANTS (105 aa).

Belongs to the UPF0545 family. In terms of assembly, interacts with RTN4 isoform A/Nogo-A; the interaction results in enhanced RTN4-mediated inhibition of AMPA receptor clustering. Also interacts with NCAM1, RANBP2 and CCT8. Post-translationally, rapidly degraded by proteolysis following neuronal stimulation, resulting in increased AMPA receptor clustering.

It is found in the synapse. The protein localises to the synaptic cleft. Its function is as follows. Negatively regulates long-term potentiation and modulates adult synaptic plasticity. Stabilizes the interaction of RTN4 isoform A/Nogo-A with its receptors, inhibiting clustering of postsynaptic AMPA receptors at synaptic sites. Upon neuronal stimulation, degraded at synapses, reducing RTN4 signaling and allowing AMPA receptor clustering at individual synapses. The chain is Synaptic plasticity regulator PANTS from Pongo abelii (Sumatran orangutan).